A 470-amino-acid chain; its full sequence is Uronate isomerase (470 aa).

Belongs to the metallo-dependent hydrolases superfamily. Uronate isomerase family.

The enzyme catalyses D-glucuronate = D-fructuronate. The catalysed reaction is aldehydo-D-galacturonate = keto-D-tagaturonate. Its pathway is carbohydrate metabolism; pentose and glucuronate interconversion. The chain is Uronate isomerase from Cronobacter sakazakii (strain ATCC BAA-894) (Enterobacter sakazakii).